The following is a 137-amino-acid chain: Large ribosomal subunit protein bL21 (137 aa).

The interval 1–26 (MADTKTATPATDAEEATATPPAAAPS) is disordered.

Belongs to the bacterial ribosomal protein bL21 family. In terms of assembly, part of the 50S ribosomal subunit. Contacts protein L20.

In terms of biological role, this protein binds to 23S rRNA in the presence of protein L20. The polypeptide is Large ribosomal subunit protein bL21 (Parasynechococcus marenigrum (strain WH8102)).